The primary structure comprises 374 residues: Putative L-lysine 2,3-aminomutase aq_1632 (374 aa).

One can recognise a Radical SAM core domain in the interval 86-314; the sequence is HKYPDTALLL…ARVRYVMSHE (229 aa). 3 residues coordinate [4Fe-4S] cluster: cysteine 100, cysteine 104, and cysteine 107. N6-(pyridoxal phosphate)lysine is present on lysine 317.

The protein belongs to the radical SAM superfamily. KamA family. [4Fe-4S] cluster serves as cofactor. Requires pyridoxal 5'-phosphate as cofactor.

This Aquifex aeolicus (strain VF5) protein is Putative L-lysine 2,3-aminomutase aq_1632.